The primary structure comprises 587 residues: Pescadillo homolog (587 aa).

Residues L267 to N306 adopt a coiled-coil conformation. The tract at residues I290–E311 is disordered. A compositionally biased stretch (acidic residues) spans E295 to E311. Residues S335–A434 enclose the BRCT domain. The tract at residues T437–N587 is disordered. The segment covering K459 to D494 has biased composition (acidic residues). A coiled-coil region spans residues E470–N587. Basic and acidic residues-rich tracts occupy residues S529–K541, I559–L569, and K578–N587.

This sequence belongs to the pescadillo family. As to quaternary structure, component of the NOP7 complex, composed of ERB1, NOP7 and YTM1. The complex is held together by ERB1, which interacts with NOP7 via its N-terminal domain and with YTM1 via a high-affinity interaction between the seven-bladed beta-propeller domains of the 2 proteins. The NOP7 complex associates with the 66S pre-ribosome.

The protein localises to the nucleus. It localises to the nucleolus. The protein resides in the nucleoplasm. In terms of biological role, component of the NOP7 complex, which is required for maturation of the 25S and 5.8S ribosomal RNAs and formation of the 60S ribosome. Required for the transition from hyphal to yeast growth. In Candida albicans (strain SC5314 / ATCC MYA-2876) (Yeast), this protein is Pescadillo homolog.